The sequence spans 298 residues: Proton-activated chloride channel (298 aa).

Residues 1–12 (MPIGFNKACLKN) lie on the Cytoplasmic side of the membrane. Residues 13–33 (VFTVILVLIYLALTAVAVFLA) form a helical membrane-spanning segment. Over 34-245 (YQTISDFMDK…RDPFIQQVKD (212 aa)) the chain is Extracellular. The chain crosses the membrane as a helical span at residues 246–266 (IVTANPWNTIAILCGVFMALF). Topologically, residues 267–298 (KAADFAKLSIKWMIRIRKRHIRAKMREMNQIS) are cytoplasmic.

It belongs to the proton-activated chloride channel family.

It is found in the cell membrane. It carries out the reaction chloride(in) = chloride(out). Functionally, chloride channel gated by pH that facilitates the entry of chloride ions into cells upon exposure to extracellular acidic pH. Displays channel activity with distinct kinetic properties compared to the human ortholog channel. The polypeptide is Proton-activated chloride channel (Danio rerio (Zebrafish)).